Consider the following 371-residue polypeptide: Protein lifeguard 1 (371 aa).

Residues 1–145 (MSHEKSFLVS…EGPPSYYDNQ (145 aa)) are disordered. Over residues 14-49 (YPPPNPGYPGGPQPPMPPYAQPPYPGAPYPQPPFQP) the composition is skewed to pro residues. Low complexity predominate over residues 84-98 (YPQEGYPQGPYPQGG). Pro residues predominate over residues 102 to 114 (GPYPQSPFPPNPY). 7 consecutive transmembrane segments (helical) span residues 165–185 (VFLVLTLQLSVTLSTVSVFTF), 197–217 (VWTYYVSYAVFFISLIVLSCC), 228–248 (LVALSVLTASLSYMVGMIASF), 253–273 (AVIMAVGITTAVCFTVVIFSM), 283–303 (MGVLLVSMVVLFIFAILCIFI), 307–327 (ILEIVYASLGALLFTCFLAVD), and 346–366 (FAALNLYTDIINIFLYILTII).

Belongs to the BI1 family. LFG subfamily.

It localises to the membrane. Its function is as follows. Potential apoptotic regulator. The chain is Protein lifeguard 1 (GRINA) from Homo sapiens (Human).